An 812-amino-acid chain; its full sequence is Outer membrane usher protein FaeD (812 aa).

Positions 1–35 are cleaved as a signal peptide; the sequence is MKKYVTTKSVQPVAFRLTTLSLVMSAVLGSASVIA. C793 and C811 are joined by a disulfide.

Belongs to the fimbrial export usher family.

The protein localises to the cell outer membrane. Involved in the export and assembly of K88ab fimbrial subunits across the outer membrane. The chain is Outer membrane usher protein FaeD (faeD) from Escherichia coli.